We begin with the raw amino-acid sequence, 289 residues long: MLGWCEAIARNPHRIPNNTRTPEISGDLADASQTSTLNEKSPGRSASRSSNISKASSPTTGTAPRSQSRLSVCPSTQDICRICHCEGDEESPLITPCRCTGTLRFVHQSCLHQWIKSSDTRCCELCKYDFIMETKLKPLRKWEKLQMTTSERRKIFCSVTFHVIAITCVVWSLYVLIDRTAEEIKQGNDNGVLEWPFWTKLVVVAIGFTGGLVFMYVQCKVYVQLWRRLKAYNRVIFVQNCPDTAKKLEKNFSCNVNTDIKDAVVVPVPQTGANSLPSAEGGPPEVVSV.

Residues 1 to 66 (MLGWCEAIAR…SPTTGTAPRS (66 aa)) are responsible for low stability. A disordered region spans residues 13–69 (HRIPNNTRTPEISGDLADASQTSTLNEKSPGRSASRSSNISKASSPTTGTAPRSQSR). A compositionally biased stretch (low complexity) spans 43–58 (GRSASRSSNISKASSP). Positions 59–69 (TTGTAPRSQSR) are enriched in polar residues. The RING-CH-type zinc finger occupies 72–133 (VCPSTQDICR…ELCKYDFIME (62 aa)). Zn(2+) is bound by residues Cys80, Cys83, Cys97, Cys99, His107, Cys110, Cys123, and Cys126. Transmembrane regions (helical) follow at residues 155–175 (IFCS…SLYV) and 197–217 (FWTK…FMYV). The segment at 222–279 (YVQLWRRLKAYNRVIFVQNCPDTAKKLEKNFSCNVNTDIKDAVVVPVPQTGANSLPSA) is responsible for down-regulation of CD86 and MHC class II cell surface expression.

As to quaternary structure, interacts with CD83; this interaction antagonizes MARCHF1-mediated MHC II and CD86 down-regulation. Ubiquitinated via ubiquitin-conjugating enzyme E2 D1/UBE2D1 independently of lysines, leading to proteolytic degradation. Post-translationally, has a short half-life. Instability/short half-life permits rapid changes that allow efficient induction of antigen presentation once antigen presenting cells, APCs, receive maturation signals. Small changes in protein levels significantly alter the cell surface display of MHC class II proteins. As to expression, expressed in antigen presenting cells, APCs, located in lymph nodes and spleen. Also expressed in lung. Expression is high in follicular B-cells, moderate in dendritic cells and low in splenic T-cells.

It localises to the golgi apparatus. Its subcellular location is the trans-Golgi network membrane. The protein resides in the lysosome membrane. It is found in the cytoplasmic vesicle membrane. The protein localises to the late endosome membrane. It localises to the early endosome membrane. Its subcellular location is the cell membrane. The catalysed reaction is S-ubiquitinyl-[E2 ubiquitin-conjugating enzyme]-L-cysteine + [acceptor protein]-L-lysine = [E2 ubiquitin-conjugating enzyme]-L-cysteine + N(6)-ubiquitinyl-[acceptor protein]-L-lysine.. The protein operates within protein modification; protein ubiquitination. Its function is as follows. E3 ubiquitin-protein ligase that mediates ubiquitination of TFRC, CD86, FAS and MHC class II proteins, such as HLA-DR alpha and beta, and promotes their subsequent endocytosis and sorting to lysosomes via multivesicular bodies. By constitutively ubiquitinating MHC class II proteins in immature dendritic cells, down-regulates their cell surface localization thus sequestering them in the intracellular endosomal system. Also regulates insulin sensitivity by controlling surface expression of the insulin receptor subunit beta/INSR by direct ubiquitination and degradation. Functionally, (Microbial infection) Plays a role in iron metabolism by regulating the levels of the transferrin receptor TFRC during human cytomegalovirus infection, subsequently contributing to a proviral effect. This Homo sapiens (Human) protein is E3 ubiquitin-protein ligase MARCHF1.